The following is a 257-amino-acid chain: Ribonuclease HII (257 aa).

Residues 70 to 257 enclose the RNase H type-2 domain; sequence EFIAGIDEVG…PIKSMVAGGN (188 aa). Positions 76, 77, and 168 each coordinate a divalent metal cation.

This sequence belongs to the RNase HII family. Mn(2+) serves as cofactor. It depends on Mg(2+) as a cofactor.

It localises to the cytoplasm. The enzyme catalyses Endonucleolytic cleavage to 5'-phosphomonoester.. Endonuclease that specifically degrades the RNA of RNA-DNA hybrids. This Streptococcus suis (strain 98HAH33) protein is Ribonuclease HII.